The chain runs to 272 residues: MAVYAVGDLQGCLQPLKCLLEQVAFDPAQDQLWLVGDLVNRGPQSLETLRFLYSIRHALTCVLGNHDLHLLAVAHNIERLKKGDTLREILDAPDRDDLLDWLRLQKLVHHDAERQITLVHAGIPPQWSLAKALKRAAEVEEVLRDDARLPLFLDGMYGNEPAKWNKDLHGVTRLRVITNYFTRMRFCTADGTLDLKSKEGVGSAPPGFAPWFSHPQRKMRGEKIIFGHWAALDGNCQEPGLYALDTGCVWGGAMTLLNVDSGALHRCTCPKQ.

It belongs to the Ap4A hydrolase family.

The catalysed reaction is P(1),P(4)-bis(5'-adenosyl) tetraphosphate + H2O = 2 ADP + 2 H(+). Its function is as follows. Hydrolyzes diadenosine 5',5'''-P1,P4-tetraphosphate to yield ADP. This Ectopseudomonas mendocina (strain ymp) (Pseudomonas mendocina) protein is Bis(5'-nucleosyl)-tetraphosphatase, symmetrical.